A 517-amino-acid polypeptide reads, in one-letter code: Methionine aminopeptidase 1b (517 aa).

Positions 74-94 (YCNKENSNNNNNNNNNNNNNL) are disordered. The segment covering 79–94 (NSNNNNNNNNNNNNNL) has biased composition (low complexity). The C6H2-type zinc finger occupies 114 to 166 (ENLCSGCKKVLIKKLSCPICLKNKIFSYFCNQECFKGSWKEHQKIHENMNKEN). 8 residues coordinate Zn(2+): Cys117, Cys120, Cys130, Cys133, Cys143, Cys147, His155, and His159. Residue His325 participates in a protein binding. Zn(2+) is bound by residues Asp342, Asp353, and His419. His426 is a binding site for a protein. Zn(2+) is bound by residues Glu452 and Glu483.

Belongs to the peptidase M24A family. Methionine aminopeptidase type 1 subfamily. As to quaternary structure, associates with the 60S ribosomal subunit of the 80S translational complex. Zn(2+) serves as cofactor. Co(2+) is required as a cofactor. The cofactor is Mn(2+). It depends on Fe(2+) as a cofactor.

It localises to the cytoplasm. The catalysed reaction is Release of N-terminal amino acids, preferentially methionine, from peptides and arylamides.. With respect to regulation, inhibited by pyrimidine derivative XC11. Functionally, cotranslationally removes the N-terminal methionine from nascent proteins. The N-terminal methionine is often cleaved when the second residue in the primary sequence is small and uncharged (Met-Ala-, Cys, Gly, Pro, Ser, Thr, or Val). May play an important role in parasite growth during the blood asexual stage. The chain is Methionine aminopeptidase 1b from Plasmodium falciparum (isolate 3D7).